Consider the following 256-residue polypeptide: uncharacterized protein (256 aa).

Positions 7 to 62 constitute an HTH deoR-type domain; that stretch reads PAERQKTLLNLISKQSVISINNLVNILGVSHMTVRRDIQKLEEDGKVISVSGGVQL. Positions 24–43 form a DNA-binding region, H-T-H motif; sequence ISINNLVNILGVSHMTVRRD.

This is an uncharacterized protein from Haemophilus influenzae (strain ATCC 51907 / DSM 11121 / KW20 / Rd).